The primary structure comprises 211 residues: Urease accessory protein UreG (211 aa).

8 to 15 contributes to the GTP binding site; that stretch reads GPVGSGKT.

Belongs to the SIMIBI class G3E GTPase family. UreG subfamily. As to quaternary structure, homodimer. UreD, UreF and UreG form a complex that acts as a GTP-hydrolysis-dependent molecular chaperone, activating the urease apoprotein by helping to assemble the nickel containing metallocenter of UreC. The UreE protein probably delivers the nickel.

It is found in the cytoplasm. In terms of biological role, facilitates the functional incorporation of the urease nickel metallocenter. This process requires GTP hydrolysis, probably effectuated by UreG. This is Urease accessory protein UreG from Metallosphaera sedula (strain ATCC 51363 / DSM 5348 / JCM 9185 / NBRC 15509 / TH2).